A 301-amino-acid polypeptide reads, in one-letter code: 5'-3' exonuclease (301 aa).

A 5'-3' exonuclease domain is found at 182 to 264 (GYADLALLRG…RVAADVPLPD (83 aa)).

Its function is as follows. 5'-3' exonuclease acting preferentially on double-stranded DNA. The protein is 5'-3' exonuclease of Streptomyces coelicolor (strain ATCC BAA-471 / A3(2) / M145).